The chain runs to 230 residues: Cytochrome c oxidase subunit 2 (230 aa).

The Mitochondrial intermembrane portion of the chain corresponds to Met-1 to Ser-14. A helical membrane pass occupies residues Pro-15–Met-45. Residues Val-46–Gln-59 lie on the Mitochondrial matrix side of the membrane. A helical transmembrane segment spans residues Glu-60–Met-87. Residues Asp-88–Ala-230 lie on the Mitochondrial intermembrane side of the membrane. Cu cation contacts are provided by His-161, Cys-196, Glu-198, Cys-200, His-204, and Met-207. A Mg(2+)-binding site is contributed by Glu-198.

This sequence belongs to the cytochrome c oxidase subunit 2 family. As to quaternary structure, component of the cytochrome c oxidase (complex IV, CIV), a multisubunit enzyme composed of 14 subunits. The complex is composed of a catalytic core of 3 subunits MT-CO1, MT-CO2 and MT-CO3, encoded in the mitochondrial DNA, and 11 supernumerary subunits COX4I, COX5A, COX5B, COX6A, COX6B, COX6C, COX7A, COX7B, COX7C, COX8 and NDUFA4, which are encoded in the nuclear genome. The complex exists as a monomer or a dimer and forms supercomplexes (SCs) in the inner mitochondrial membrane with NADH-ubiquinone oxidoreductase (complex I, CI) and ubiquinol-cytochrome c oxidoreductase (cytochrome b-c1 complex, complex III, CIII), resulting in different assemblies (supercomplex SCI(1)III(2)IV(1) and megacomplex MCI(2)III(2)IV(2)). Found in a complex with TMEM177, COA6, COX18, COX20, SCO1 and SCO2. Interacts with TMEM177 in a COX20-dependent manner. Interacts with COX20. Interacts with COX16. It depends on Cu cation as a cofactor.

The protein localises to the mitochondrion inner membrane. The catalysed reaction is 4 Fe(II)-[cytochrome c] + O2 + 8 H(+)(in) = 4 Fe(III)-[cytochrome c] + 2 H2O + 4 H(+)(out). Functionally, component of the cytochrome c oxidase, the last enzyme in the mitochondrial electron transport chain which drives oxidative phosphorylation. The respiratory chain contains 3 multisubunit complexes succinate dehydrogenase (complex II, CII), ubiquinol-cytochrome c oxidoreductase (cytochrome b-c1 complex, complex III, CIII) and cytochrome c oxidase (complex IV, CIV), that cooperate to transfer electrons derived from NADH and succinate to molecular oxygen, creating an electrochemical gradient over the inner membrane that drives transmembrane transport and the ATP synthase. Cytochrome c oxidase is the component of the respiratory chain that catalyzes the reduction of oxygen to water. Electrons originating from reduced cytochrome c in the intermembrane space (IMS) are transferred via the dinuclear copper A center (CU(A)) of subunit 2 and heme A of subunit 1 to the active site in subunit 1, a binuclear center (BNC) formed by heme A3 and copper B (CU(B)). The BNC reduces molecular oxygen to 2 water molecules using 4 electrons from cytochrome c in the IMS and 4 protons from the mitochondrial matrix. This chain is Cytochrome c oxidase subunit 2 (MT-CO2), found in Squalus acanthias (Spiny dogfish).